A 75-amino-acid polypeptide reads, in one-letter code: Exodeoxyribonuclease 7 small subunit (75 aa).

It belongs to the XseB family. Heterooligomer composed of large and small subunits.

It localises to the cytoplasm. The enzyme catalyses Exonucleolytic cleavage in either 5'- to 3'- or 3'- to 5'-direction to yield nucleoside 5'-phosphates.. Bidirectionally degrades single-stranded DNA into large acid-insoluble oligonucleotides, which are then degraded further into small acid-soluble oligonucleotides. The polypeptide is Exodeoxyribonuclease 7 small subunit (Chlamydia pneumoniae (Chlamydophila pneumoniae)).